The chain runs to 73 residues: Large ribosomal subunit protein bL31 (73 aa).

It belongs to the bacterial ribosomal protein bL31 family. Type A subfamily. Part of the 50S ribosomal subunit.

Its function is as follows. Binds the 23S rRNA. The protein is Large ribosomal subunit protein bL31 of Rhizobium rhizogenes (strain K84 / ATCC BAA-868) (Agrobacterium radiobacter).